Reading from the N-terminus, the 457-residue chain is Cysteine--tRNA ligase (457 aa).

Cys28 provides a ligand contact to Zn(2+). The 'HIGH' region motif lies at 30 to 40; it reads ITVYDLCHIGH. Zn(2+)-binding residues include Cys209, His234, and Glu238. The short motif at 266 to 270 is the 'KMSKS' region element; that stretch reads KMSKS. Lys269 contacts ATP.

Belongs to the class-I aminoacyl-tRNA synthetase family. In terms of assembly, monomer. Zn(2+) serves as cofactor.

The protein localises to the cytoplasm. It catalyses the reaction tRNA(Cys) + L-cysteine + ATP = L-cysteinyl-tRNA(Cys) + AMP + diphosphate. In Sodalis glossinidius (strain morsitans), this protein is Cysteine--tRNA ligase.